The primary structure comprises 195 residues: Granulocyte colony-stimulating factor (195 aa).

Residues Met-1–Ala-21 form the signal peptide. Cystine bridges form between Cys-57-Cys-63 and Cys-85-Cys-95. The O-linked (GalNAc...) threonine glycan is linked to Thr-154.

The protein belongs to the IL-6 superfamily. As to quaternary structure, monomer. In terms of processing, O-glycosylated.

The protein resides in the secreted. Functionally, granulocyte/macrophage colony-stimulating factors are cytokines that act in hematopoiesis by controlling the production, differentiation, and function of 2 related white cell populations of the blood, the granulocytes and the monocytes-macrophages. This CSF induces granulocytes. The chain is Granulocyte colony-stimulating factor (CSF3) from Bos taurus (Bovine).